Consider the following 519-residue polypeptide: Bifunctional pantoate ligase/cytidylate kinase (519 aa).

A pantoate--beta-alanine ligase region spans residues 1–282 (MNLTILRTKT…CGNTRLIDHG (282 aa)). 30–37 (MGGLHQGH) serves as a coordination point for ATP. His37 functions as the Proton donor in the catalytic mechanism. Gln66 provides a ligand contact to (R)-pantoate. Gln66 serves as a coordination point for beta-alanine. Residue 155 to 158 (GEKD) participates in ATP binding. Gln161 is a binding site for (R)-pantoate. Residue 192 to 195 (CSSR) coordinates ATP. The interval 283–519 (FLMKRNPIVA…PQEVWPTNAT (237 aa)) is cytidylate kinase.

The protein in the N-terminal section; belongs to the pantothenate synthetase family. It in the C-terminal section; belongs to the cytidylate kinase family. Type 1 subfamily.

It is found in the cytoplasm. The enzyme catalyses (R)-pantoate + beta-alanine + ATP = (R)-pantothenate + AMP + diphosphate + H(+). It carries out the reaction CMP + ATP = CDP + ADP. The catalysed reaction is dCMP + ATP = dCDP + ADP. It functions in the pathway cofactor biosynthesis; (R)-pantothenate biosynthesis; (R)-pantothenate from (R)-pantoate and beta-alanine: step 1/1. Functionally, catalyzes the condensation of pantoate with beta-alanine in an ATP-dependent reaction via a pantoyl-adenylate intermediate. In terms of biological role, catalyzes the transfer of a phosphate group from ATP to either CMP or dCMP to form CDP or dCDP and ADP, respectively. The polypeptide is Bifunctional pantoate ligase/cytidylate kinase (Prochlorococcus marinus (strain SARG / CCMP1375 / SS120)).